The chain runs to 485 residues: MALSVEKTAAGREYKVKDMSLADFGRLELELAEVEMPGLMSCRTEFGPSQPFKGARITGSLHMTIQTGVLIETLTALGAEVRWCSCNIFSTQDHAAAAIARDSCAVFAWKGETLQEYWWCTERALDWGPDGGPDLIVDDGGDATLLIHEGVKAEEEYKKSGAIPDPASTDNAEFQIVLSIIRDGLKSDPMKYHKMKDRLVGVSEETTTGVKRLYQMQQNGTLLFPAINVNDSVTKSKFDNLYGCRHSLPDGLMRATDVMIAGKVALIAGYGDVGKGCAAAMKQAGARVIVTEIDPICALQATMEGLQVLPLEDVVSEVDIFVTTTGNKDIIMVSDMRKMKNNAIVCNIGHFDNEIDMLGLETYPGVKRITIKPQTDRWVFPDTGRGIIILAEGRLMNLGCATGHPSFVMSCSFTNQVIAQLELWNEKSSGKYEKKVYVLPKHLDEKVAALHLGKLGAKLTKLSKDQADYISVPVEGPYKPAHYRY.

Residues Thr64, Asp139, and Glu205 each contribute to the substrate site. 206 to 208 provides a ligand contact to NAD(+); that stretch reads TTT. Residues Lys235 and Asp239 each coordinate substrate. Residues Asn240, 269 to 274, Glu292, Asn327, 348 to 350, and Asn397 each bind NAD(+); these read GYGDVG and IGH.

Belongs to the adenosylhomocysteinase family. In terms of assembly, homotetramer. The cofactor is NAD(+). In terms of tissue distribution, mainly in floral buds and stems.

The enzyme catalyses S-adenosyl-L-homocysteine + H2O = L-homocysteine + adenosine. It participates in amino-acid biosynthesis; L-homocysteine biosynthesis; L-homocysteine from S-adenosyl-L-homocysteine: step 1/1. In terms of biological role, adenosylhomocysteine is a competitive inhibitor of S-adenosyl-L-methionine-dependent methyl transferase reactions; therefore adenosylhomocysteinase may play a key role in the control of methylations via regulation of the intracellular concentration of adenosylhomocysteine. The sequence is that of Adenosylhomocysteinase (SAHH) from Petroselinum crispum (Parsley).